The chain runs to 582 residues: DNA polymerase IV (582 aa).

The disordered stretch occupies residues 127–161 (NADDGQSSTDKESEISTDVESERNDDSNNKDMIQA). Over residues 135 to 155 (TDKESEISTDVESERNDDSNN) the composition is skewed to basic and acidic residues. Residues 360 to 369 (RGYSKCGDID) are involved in ssDNA binding. Residues Asp367, Asp369, and Asp502 each contribute to the Mg(2+) site.

The protein belongs to the DNA polymerase type-X family. Interacts with DNL4 subunit of the DNL4-LIF1 complex. Mg(2+) is required as a cofactor.

The protein resides in the nucleus. It carries out the reaction DNA(n) + a 2'-deoxyribonucleoside 5'-triphosphate = DNA(n+1) + diphosphate. Stimulated by the interaction with the DNL4-LIF1 complex. Repair polymerase. Involved in gap-filling in DNA nonhomologous end joining (NHEJ) required for double-strand break repair. Seems to conduct DNA synthesis in a stepwise distributive fashion rather than in a processive fashion as for other DNA polymerases. Preferentially acts upon short gaps formed by the alignment of linear duplexes with complementary single-strand ends. Required for filling gaps that need removal of a 5'- or 3'-terminal mismatch, however lacks nuclease activities. The polypeptide is DNA polymerase IV (POL4) (Saccharomyces cerevisiae (strain ATCC 204508 / S288c) (Baker's yeast)).